A 489-amino-acid chain; its full sequence is Threonine/serine exporter (489 aa).

10 helical membrane passes run G151–G171, W174–L194, V206–F226, S233–L253, F268–L288, I314–S334, V335–Y355, L356–L376, L381–I401, and I420–I440. The disordered stretch occupies residues F464–R489. A compositionally biased stretch (basic residues) spans R473–R489.

This sequence belongs to the ThrE exporter (TC 2.A.79) family.

The protein resides in the cell membrane. It catalyses the reaction L-threonine(in) + H(+)(out) = L-threonine(out) + H(+)(in). With respect to regulation, transport is inhibited by the proton ionophore carbonyl cyanide m-chlorophenylhydrazone (CCCP). Catalyzes the export of L-threonine and L-serine from the cell to the extracellular environment. Export is dependent on the proton motive force. This chain is Threonine/serine exporter, found in Corynebacterium glutamicum (Brevibacterium saccharolyticum).